We begin with the raw amino-acid sequence, 327 residues long: Putative D-threonate 4-phosphate dehydrogenase (327 aa).

The substrate site is built by histidine 139 and threonine 140. A divalent metal cation is bound by residues histidine 169, histidine 213, and histidine 268. 3 residues coordinate substrate: lysine 276, asparagine 285, and arginine 294.

Belongs to the PdxA family. PdxA2 subfamily. In terms of assembly, homodimer. It depends on a divalent metal cation as a cofactor.

It catalyses the reaction 4-O-phospho-D-threonate + NAD(+) = dihydroxyacetone phosphate + CO2 + NADH. Its function is as follows. Catalyzes the NAD-dependent oxidation and subsequent decarboxylation of D-threonate 4-phosphate to produce dihydroxyacetone phosphate (DHAP). This is Putative D-threonate 4-phosphate dehydrogenase from Salmonella typhi.